Reading from the N-terminus, the 409-residue chain is Putative kinase Y4dM (409 aa).

Residue Asp-293 is the Proton acceptor of the active site.

It belongs to the HipA Ser/Thr kinase family.

The chain is Putative kinase Y4dM from Sinorhizobium fredii (strain NBRC 101917 / NGR234).